The chain runs to 338 residues: Citramalyl-CoA lyase, mitochondrial (338 aa).

A mitochondrion-targeting transit peptide spans M1 to K20. Residues Y48, K55, and K59 each contribute to the substrate site. Residues K55, K59, and K64 each carry the N6-acetyllysine modification. 2 positions are modified to N6-acetyllysine; alternate: K80 and K90. N6-succinyllysine; alternate occurs at positions 80 and 90. Residue R105 participates in substrate binding. Positions 169 and 204 each coordinate Mg(2+). I270–H271 provides a ligand contact to substrate. An N6-succinyllysine modification is found at K307. D318 is a catalytic residue.

Belongs to the HpcH/HpaI aldolase family. Citrate lyase beta subunit-like subfamily. As to quaternary structure, homotrimer. Requires Mg(2+) as cofactor. As to expression, detected in brown fat, brain, liver, kidney, heart, skeletal muscle and ovary (at protein level).

Its subcellular location is the mitochondrion. The enzyme catalyses glyoxylate + acetyl-CoA + H2O = (S)-malate + CoA + H(+). The catalysed reaction is propanoyl-CoA + glyoxylate + H2O = 3-methylmalate + CoA + H(+). It catalyses the reaction (3S)-citramalyl-CoA = pyruvate + acetyl-CoA. It carries out the reaction (S)-malyl-CoA + H2O = (S)-malate + CoA + H(+). In terms of biological role, mitochondrial citramalyl-CoA lyase indirectly involved in the vitamin B12 metabolism. Converts citramalyl-CoA into acetyl-CoA and pyruvate in the C5-dicarboxylate catabolism pathway. The C5-dicarboxylate catabolism pathway is required to detoxify itaconate, a vitamin B12-poisoning metabolite. Also acts as a malate synthase in vitro, converting glyoxylate and acetyl-CoA to malate. Also displays malyl-CoA thioesterase activity. Also acts as a beta-methylmalate synthase in vitro, by mediating conversion of glyoxylate and propionyl-CoA to beta-methylmalate. Also has very weak citramalate synthase activity in vitro. This chain is Citramalyl-CoA lyase, mitochondrial, found in Mus musculus (Mouse).